A 277-amino-acid polypeptide reads, in one-letter code: Putative phosphoenolpyruvate synthase regulatory protein (277 aa).

157-164 (GVSRSGKT) serves as a coordination point for ADP.

The protein belongs to the pyruvate, phosphate/water dikinase regulatory protein family. PSRP subfamily.

The enzyme catalyses [pyruvate, water dikinase] + ADP = [pyruvate, water dikinase]-phosphate + AMP + H(+). It catalyses the reaction [pyruvate, water dikinase]-phosphate + phosphate + H(+) = [pyruvate, water dikinase] + diphosphate. Functionally, bifunctional serine/threonine kinase and phosphorylase involved in the regulation of the phosphoenolpyruvate synthase (PEPS) by catalyzing its phosphorylation/dephosphorylation. The chain is Putative phosphoenolpyruvate synthase regulatory protein from Vibrio atlanticus (strain LGP32) (Vibrio splendidus (strain Mel32)).